The sequence spans 133 residues: Ubiquitin-like FUBI-ribosomal protein eS30 fusion protein (133 aa).

In terms of domain architecture, Ubiquitin-like spans 1-74 (MQLFVRAQEL…LEVAGRMLGG (74 aa)). Position 125 is an N6-succinyllysine (Lys125).

This sequence in the N-terminal section; belongs to the ubiquitin family. The protein in the C-terminal section; belongs to the eukaryotic ribosomal protein eS30 family. Component of the 40S subunit of the ribosome. Post-translationally, FUBI is cleaved from ribosomal protein S30 by the deubiquitinase USP36 before the assembly of ribosomal protein S30 into pre-40S ribosomal particles. FUBI removal from ribosomal protein S30 is a crucial event for the final maturation of pre-40S particles.

The protein resides in the cytoplasm. It localises to the nucleus. May have pro-apoptotic activity. Its function is as follows. Component of the 40S subunit of the ribosome. Contributes to the assembly and function of 40S ribosomal subunits. The polypeptide is Ubiquitin-like FUBI-ribosomal protein eS30 fusion protein (FAU) (Oryctolagus cuniculus (Rabbit)).